A 285-amino-acid polypeptide reads, in one-letter code: MEMO1 family protein Igni_0992 (285 aa).

It belongs to the MEMO1 family.

The sequence is that of MEMO1 family protein Igni_0992 from Ignicoccus hospitalis (strain KIN4/I / DSM 18386 / JCM 14125).